Here is a 541-residue protein sequence, read N- to C-terminus: Glucose-6-phosphate isomerase (541 aa).

Residue Glu-347 is the Proton donor of the active site. Residues His-378 and Lys-506 contribute to the active site.

Belongs to the GPI family.

It is found in the cytoplasm. The enzyme catalyses alpha-D-glucose 6-phosphate = beta-D-fructose 6-phosphate. It participates in carbohydrate biosynthesis; gluconeogenesis. The protein operates within carbohydrate degradation; glycolysis; D-glyceraldehyde 3-phosphate and glycerone phosphate from D-glucose: step 2/4. Catalyzes the reversible isomerization of glucose-6-phosphate to fructose-6-phosphate. The protein is Glucose-6-phosphate isomerase of Francisella tularensis subsp. holarctica (strain OSU18).